The sequence spans 88 residues: MLEDTTIHNAITDKALASYFRSSGNLLEEESAVLGQAVTNLMLSGDNVNNKNIILSLIHSLETTSDILKADVIRKTLEIVLRYTADDM.

It belongs to the AriR family. As to quaternary structure, homodimer.

Its function is as follows. Regulates expression of genes involved in acid-resistance and biofilm formation. May be a non-specific DNA-binding protein that binds genes and/or intergenic regions via a geometric recognition. The sequence is that of Regulatory protein AriR (ariR) from Escherichia coli O139:H28 (strain E24377A / ETEC).